Reading from the N-terminus, the 71-residue chain is Small ribosomal subunit protein bS21 (71 aa).

A compositionally biased stretch (basic residues) spans 50 to 59 (AAAVKRHAKK). Residues 50–71 (AAAVKRHAKKVQREQRRAVRLY) form a disordered region. The segment covering 60 to 71 (VQREQRRAVRLY) has biased composition (basic and acidic residues).

This sequence belongs to the bacterial ribosomal protein bS21 family.

The protein is Small ribosomal subunit protein bS21 of Pseudomonas fluorescens (strain ATCC BAA-477 / NRRL B-23932 / Pf-5).